Here is a 490-residue protein sequence, read N- to C-terminus: Glutamyl-tRNA(Gln) amidotransferase subunit A (490 aa).

Active-site charge relay system residues include K77 and S152. The Acyl-ester intermediate role is filled by S176.

It belongs to the amidase family. GatA subfamily. Heterotrimer of A, B and C subunits.

The enzyme catalyses L-glutamyl-tRNA(Gln) + L-glutamine + ATP + H2O = L-glutaminyl-tRNA(Gln) + L-glutamate + ADP + phosphate + H(+). Allows the formation of correctly charged Gln-tRNA(Gln) through the transamidation of misacylated Glu-tRNA(Gln) in organisms which lack glutaminyl-tRNA synthetase. The reaction takes place in the presence of glutamine and ATP through an activated gamma-phospho-Glu-tRNA(Gln). The protein is Glutamyl-tRNA(Gln) amidotransferase subunit A of Limosilactobacillus reuteri (strain DSM 20016) (Lactobacillus reuteri).